The chain runs to 53 residues: Conotoxin Cal6.23 (53 aa).

The first 22 residues, 1-22 (MKLTAVLMVAVLVLTACQLITA), serve as a signal peptide directing secretion. Cystine bridges form between cysteine 25-cysteine 40, cysteine 32-cysteine 47, and cysteine 39-cysteine 51.

The protein belongs to the conotoxin O1 superfamily. As to expression, expressed by the venom duct.

The protein resides in the secreted. Probable neurotoxin. The protein is Conotoxin Cal6.23 of Californiconus californicus (California cone).